We begin with the raw amino-acid sequence, 755 residues long: MSQEPSSSFSDGFMESDFSQGSFSASDDAELSIPSEFAESVDELSSSSDNGDQGQPLTEPNNIPIDEDTVYNIWGQVVGTRRKDIGPDGSSLDMFLERHKDTNEFFRTVYDPAKGYKRANLTPEEEEMIRNVMVSRPYNDAPGLSRMNIQSTLVNKNIMRTALTSDIVGPKEKYASKAIVRKIEKLREGIERGEIVYDPNRYKVDENRGLVVGNRDLWADVDETEDPSMRIPKGRGEMYMNPTKPKLPGHALSYNPPLEYLNIDGDGSQQKLQSLRQIKTYTNFVKDQFDRCVTLYLNPRQRLRKEEDMDSMLPTLPNRSLLTPYPTFCAMTIRTGTRRINGLTFSPKGMFFAVGGRDCILRVFETYSGRQVRAIPVLSTKKLEKKSINFLNLEINCCKWCPRTDVSIIAVCAGDELIFVDAGICESGNYNEVRERTRFLLNARPETTQPCPHMAWEMHAGVTSGGKSYASGFVTQVSSNAYNEGSEDDDAAESARFNEERHQRGHEGQIDADVYTVYTRLNQFVLLRIHHTHLVSFCNWHFQGDYIVTVCTDDKSRAKVTLHQLSKWHSLSPFNRLKSKIIGAHFRTKKSELIVVSERSSRIYNLLTGDKLSTLYPGVKQVTASGMGYGDNFITGSADSQCALFANAAGPEPTAKLCYHTSTIRNIDVHPCGGLVATCSDDGIVQISRIVDASLVKMHPGQFDEKLYNRMIPCVVLNRRRQAADGSVGISRVTWHPRQPWLLCSGTDGVLRLFK.

2 stretches are compositionally biased toward polar residues: residues M1–S10 and E43–N61. The tract at residues M1–I65 is disordered. The interval M309–F754 is interaction with EB1. One copy of the WD 1 repeat lies at T335–A374. The disordered stretch occupies residues Y482–G505. Residues R496–G505 are compositionally biased toward basic and acidic residues. WD repeat units lie at residues P617–A655, Y659–M698, and D725–K755.

This sequence belongs to the WD repeat BOP1/ERB1 family. Interacts (via C-terminal WD repeats) with giardin subunit beta. Interacts (via C-terminal WD repeats) with EB1.

Its subcellular location is the nucleus. The protein resides in the nucleolus. The protein localises to the nucleus membrane. In terms of biological role, required for maturation of ribosomal RNAs and formation of the large ribosomal subunit. In Giardia intestinalis (Giardia lamblia), this protein is Ribosome biogenesis protein BOP1.